We begin with the raw amino-acid sequence, 164 residues long: Phosphopantetheine adenylyltransferase (164 aa).

Ser10 serves as a coordination point for substrate. Residues 10–11 and His18 each bind ATP; that span reads SF. Positions 42, 74, and 88 each coordinate substrate. ATP-binding positions include 89–91, Glu99, and 124–130; these read GLR and YAFLSSS.

The protein belongs to the bacterial CoaD family. In terms of assembly, homohexamer. The cofactor is Mg(2+).

It is found in the cytoplasm. It carries out the reaction (R)-4'-phosphopantetheine + ATP + H(+) = 3'-dephospho-CoA + diphosphate. The protein operates within cofactor biosynthesis; coenzyme A biosynthesis; CoA from (R)-pantothenate: step 4/5. Functionally, reversibly transfers an adenylyl group from ATP to 4'-phosphopantetheine, yielding dephospho-CoA (dPCoA) and pyrophosphate. The protein is Phosphopantetheine adenylyltransferase of Geobacillus thermodenitrificans (strain NG80-2).